The following is a 56-amino-acid chain: Large ribosomal subunit protein bL32 (56 aa).

The span at 1–16 (MAVQKSKKSRSRRGMR) shows a compositional bias: basic residues. The tract at residues 1–38 (MAVQKSKKSRSRRGMRRSHDAVTPENLSVDPVSGETHR) is disordered.

This sequence belongs to the bacterial ribosomal protein bL32 family.

The chain is Large ribosomal subunit protein bL32 from Colwellia psychrerythraea (strain 34H / ATCC BAA-681) (Vibrio psychroerythus).